The sequence spans 147 residues: Ubiquitin-conjugating enzyme E2 D3 (147 aa).

Positions Met-1 to Met-147 constitute a UBC core domain. Residues Cys-21 and Cys-107 are joined by a disulfide bond. Cys-85 functions as the Glycyl thioester intermediate in the catalytic mechanism.

Belongs to the ubiquitin-conjugating enzyme family. In terms of assembly, interacts with SCF (SKP1-CUL1-F-box protein) E3 ubiquitin ligase complex; when Cullin is neddylated, the interaction between the E2 and the SCF complex is strengthened. Interacts with DAPK3. Interacts with BRCA1; the DNA damage checkpoint promotes the association with BRCA1 after ionizing radiation. Interacts non-covalently with ubiquitin. Interacts with E3 ubiquitin-protein ligase CBLC. Interacts with UBTD1. Interacts with RIGI and RNF135; involved in RIGI ubiquitination and activation. In terms of processing, phosphorylated by AURKB.

The protein resides in the cell membrane. Its subcellular location is the endosome membrane. The enzyme catalyses S-ubiquitinyl-[E1 ubiquitin-activating enzyme]-L-cysteine + [E2 ubiquitin-conjugating enzyme]-L-cysteine = [E1 ubiquitin-activating enzyme]-L-cysteine + S-ubiquitinyl-[E2 ubiquitin-conjugating enzyme]-L-cysteine.. It carries out the reaction S-ubiquitinyl-[E1 ubiquitin-activating enzyme]-L-cysteine + [acceptor protein]-L-lysine = [E1 ubiquitin-activating enzyme]-L-cysteine + N(6)-monoubiquitinyl-[acceptor protein]-L-lysine.. Its pathway is protein modification; protein ubiquitination. Its function is as follows. Accepts ubiquitin from the E1 complex and catalyzes its covalent attachment to other proteins. In vitro catalyzes 'Lys-11'-, as well as 'Lys-48'-linked polyubiquitination. Cooperates with the E2 CDC34 and the SCF(FBXW11) E3 ligase complex for the polyubiquitination of NFKBIA leading to its subsequent proteasomal degradation. Acts as an initiator E2, priming the phosphorylated NFKBIA target at positions 'Lys-21' and/or 'Lys-22' with a monoubiquitin. Ubiquitin chain elongation is then performed by CDC34, building ubiquitin chains from the UBE2D3-primed NFKBIA-linked ubiquitin. Also acts as an initiator E2, in conjunction with RNF8, for the priming of PCNA. Monoubiquitination of PCNA, and its subsequent polyubiquitination, are essential events in the operation of the DNA damage tolerance (DDT) pathway that is activated after DNA damage caused by UV or chemical agents during S-phase. Associates with the BRCA1/BARD1 E3 ligase complex to perform ubiquitination at DNA damage sites following ionizing radiation leading to DNA repair. Targets DAPK3 for ubiquitination which influences promyelocytic leukemia protein nuclear body (PML-NB) formation in the nucleus. In conjunction with the MDM2 and TOPORS E3 ligases, functions ubiquitination of p53/TP53. In conjunction with the CBL E3 ligase, targets EGFR for polyubiquitination at the plasma membrane as well as during its internalization and transport on endosomes. In conjunction with the STUB1 E3 quality control E3 ligase, ubiquitinates unfolded proteins to catalyze their immediate destruction. Together with RNF135, catalyzes the viral RNA-dependent 'Lys-63'-linked polyubiquitination of RIGI to activate the downstream signaling pathway that leads to interferon beta production. Together with ZNF598, catalyzes ubiquitination of 40S ribosomal proteins in response to ribosome collisions. In cooperation with the GATOR2 complex, catalyzes 'Lys-6'-linked ubiquitination of NPRL2. This is Ubiquitin-conjugating enzyme E2 D3 (UBE2D3) from Bos taurus (Bovine).